We begin with the raw amino-acid sequence, 77 residues long: Sec-independent protein translocase protein TatA (77 aa).

Residues 1 to 21 (MGGISIWQLLIIALIVVLLFG) traverse the membrane as a helical segment. 2 stretches are compositionally biased toward basic and acidic residues: residues 47 to 56 (EKKALEDKEA) and 65 to 77 (TEKK…KEQA). Residues 47–77 (EKKALEDKEAAAQTTQQATEKKPEADKKEQA) are disordered.

It belongs to the TatA/E family. The Tat system comprises two distinct complexes: a TatABC complex, containing multiple copies of TatA, TatB and TatC subunits, and a separate TatA complex, containing only TatA subunits. Substrates initially bind to the TatABC complex, which probably triggers association of the separate TatA complex to form the active translocon.

It localises to the cell inner membrane. Functionally, part of the twin-arginine translocation (Tat) system that transports large folded proteins containing a characteristic twin-arginine motif in their signal peptide across membranes. TatA could form the protein-conducting channel of the Tat system. This is Sec-independent protein translocase protein TatA from Shewanella amazonensis (strain ATCC BAA-1098 / SB2B).